Reading from the N-terminus, the 514-residue chain is Serine--tRNA ligase, cytoplasmic (514 aa).

Position 1 is an N-acetylmethionine (Met-1). The interval 9–61 (RVDKGGDPALIRETQEKRFKDPGLVDQLVKADSEWRRCRFRADNLNKLKNLCS) is interaction with tRNA. Ser-241 is modified (phosphoserine). L-serine is bound by residues Thr-271 and Arg-302. ATP is bound by residues 302–304 (RQE) and 318–321 (VHQF). Residue Lys-323 is modified to N6-acetyllysine. Position 325 (Glu-325) interacts with L-serine. An ATP-binding site is contributed by 391–394 (ELVS). Asn-427 is a binding site for L-serine. The segment at 473–514 (PAPIEQEPSKKQKKQHEGSKKKAAARDVTLENRLQNMEVTDA) is disordered. Positions 479-502 (EPSKKQKKQHEGSKKKAAARDVTL) are enriched in basic and acidic residues. Positions 482-494 (KKQKKQHEGSKKK) match the Nuclear localization signal motif. Over residues 504–514 (NRLQNMEVTDA) the composition is skewed to polar residues.

This sequence belongs to the class-II aminoacyl-tRNA synthetase family. Type-1 seryl-tRNA synthetase subfamily. As to quaternary structure, homodimer. The tRNA molecule may bind across the dimer. Interacts with SIRT2. Interacts with METTL6; interaction is required for the tRNA N(3)-methylcytidine methyltransferase activity of METTL6. In terms of tissue distribution, brain.

Its subcellular location is the cytoplasm. The protein localises to the nucleus. The catalysed reaction is tRNA(Ser) + L-serine + ATP = L-seryl-tRNA(Ser) + AMP + diphosphate + H(+). It carries out the reaction tRNA(Sec) + L-serine + ATP = L-seryl-tRNA(Sec) + AMP + diphosphate + H(+). It participates in aminoacyl-tRNA biosynthesis; selenocysteinyl-tRNA(Sec) biosynthesis; L-seryl-tRNA(Sec) from L-serine and tRNA(Sec): step 1/1. In terms of biological role, catalyzes the attachment of serine to tRNA(Ser) in a two-step reaction: serine is first activated by ATP to form Ser-AMP and then transferred to the acceptor end of tRNA(Ser). Is probably also able to aminoacylate tRNA(Sec) with serine, to form the misacylated tRNA L-seryl-tRNA(Sec), which will be further converted into selenocysteinyl-tRNA(Sec). In the nucleus, binds to the VEGFA core promoter and prevents MYC binding and transcriptional activation by MYC. Recruits SIRT2 to the VEGFA promoter, promoting deacetylation of histone H4 at 'Lys-16' (H4K16). Thereby, inhibits the production of VEGFA and sprouting angiogenesis mediated by VEGFA. In Homo sapiens (Human), this protein is Serine--tRNA ligase, cytoplasmic.